The sequence spans 334 residues: N-acetyl-gamma-glutamyl-phosphate reductase (334 aa).

Residue Cys145 is part of the active site. The interval 173–192 is disordered; the sequence is GISGSGQDPTEGTHYPNVTQ.

Belongs to the NAGSA dehydrogenase family. Type 1 subfamily.

The protein resides in the cytoplasm. It catalyses the reaction N-acetyl-L-glutamate 5-semialdehyde + phosphate + NADP(+) = N-acetyl-L-glutamyl 5-phosphate + NADPH + H(+). It participates in amino-acid biosynthesis; L-arginine biosynthesis; N(2)-acetyl-L-ornithine from L-glutamate: step 3/4. Catalyzes the NADPH-dependent reduction of N-acetyl-5-glutamyl phosphate to yield N-acetyl-L-glutamate 5-semialdehyde. The chain is N-acetyl-gamma-glutamyl-phosphate reductase from Methanocella arvoryzae (strain DSM 22066 / NBRC 105507 / MRE50).